The following is a 381-amino-acid chain: Subtilisin NAT (381 aa).

The signal sequence occupies residues 1–29; sequence MRSKKLWISLLFALTLIFTMAFSNMSAQA. Positions 30–106 are excised as a propeptide; sequence AGKSSTEKKY…VEEDHIAHEY (77 aa). The 66-residue stretch at 38 to 103 folds into the Inhibitor I9 domain; the sequence is KYIVGFKQTM…VAYVEEDHIA (66 aa). One can recognise a Peptidase S8 domain in the interval 111–380; that stretch reads PYGISQIKAP…KGLINVQAAA (270 aa). Aspartate 138 acts as the Charge relay system in catalysis. Ca(2+) is bound at residue aspartate 147. The active-site Charge relay system is the histidine 170. The Ca(2+) site is built by leucine 181, asparagine 183, isoleucine 185, valine 187, alanine 275, tyrosine 277, threonine 280, and aspartate 303. Residue serine 327 is the Charge relay system of the active site.

The protein belongs to the peptidase S8 family. As to quaternary structure, monomer. Ca(2+) serves as cofactor.

The protein localises to the secreted. It carries out the reaction Hydrolysis of proteins with broad specificity for peptide bonds, and a preference for a large uncharged residue in P1. Hydrolyzes peptide amides.. Inhibited by PMSF (phenylmethylsulfonyl fluoride). In terms of biological role, subtilisin is an extracellular alkaline serine protease, it catalyzes the hydrolysis of proteins and peptide amides. Subtilisin NAT also has fibrinolytic activity. The chain is Subtilisin NAT from Bacillus subtilis subsp. natto.